Here is a 380-residue protein sequence, read N- to C-terminus: Cytochrome b (380 aa).

4 helical membrane-spanning segments follow: residues 33–53 (FGSL…FLAM), 77–98 (WIIR…FLHV), 113–133 (WNIG…GYVL), and 178–198 (FFTL…LHLL). Positions 83 and 97 each coordinate heme b. His182 and His196 together coordinate heme b. His201 contributes to the a ubiquinone binding site. A run of 4 helical transmembrane segments spans residues 226–246 (TKDI…TLFS), 288–308 (LGGV…PILH), 320–340 (LSQL…WIGG), and 347–367 (FITI…ILMP).

This sequence belongs to the cytochrome b family. As to quaternary structure, the cytochrome bc1 complex contains 11 subunits: 3 respiratory subunits (MT-CYB, CYC1 and UQCRFS1), 2 core proteins (UQCRC1 and UQCRC2) and 6 low-molecular weight proteins (UQCRH/QCR6, UQCRB/QCR7, UQCRQ/QCR8, UQCR10/QCR9, UQCR11/QCR10 and a cleavage product of UQCRFS1). This cytochrome bc1 complex then forms a dimer. Heme b serves as cofactor.

The protein localises to the mitochondrion inner membrane. Component of the ubiquinol-cytochrome c reductase complex (complex III or cytochrome b-c1 complex) that is part of the mitochondrial respiratory chain. The b-c1 complex mediates electron transfer from ubiquinol to cytochrome c. Contributes to the generation of a proton gradient across the mitochondrial membrane that is then used for ATP synthesis. This Pan paniscus (Pygmy chimpanzee) protein is Cytochrome b (MT-CYB).